Consider the following 664-residue polypeptide: Ent-copalyl diphosphate synthase 5 (664 aa).

Lys101 contributes to the substrate binding site. Residues Asp233 and Asp235 each coordinate Mg(2+). Positions 233–236 match the DXDD motif motif; the sequence is DIDD. Substrate is bound at residue Lys320.

It belongs to the terpene synthase family. Tpsc subfamily. The cofactor is Mg(2+). In terms of tissue distribution, ubiquitous expression in roots, stems, leaves and flowers.

The protein localises to the plastid. It localises to the chloroplast. It carries out the reaction (2E,6E,10E)-geranylgeranyl diphosphate = ent-copalyl diphosphate. Its pathway is secondary metabolite biosynthesis; terpenoid biosynthesis. Involved in the biosynthesis of ent-kaurene diterpenoids natural products such as oridonin, miltiradiene, eriocalyxin B and nezukol, known to exhibit antitumor, anti-inflammatory and antibacterial activities. Catalyzes the conversion of (2E,6E,10E)-geranylgeranyl diphosphate (GGPP) to ent-copalyl diphosphate (ent-CPP). This Isodon rubescens (Rabdosia rubescens) protein is Ent-copalyl diphosphate synthase 5.